Here is a 281-residue protein sequence, read N- to C-terminus: Probable superoxide dismutase [Fe] (281 aa).

Residues His104, His152, Asp236, and His240 each contribute to the Fe cation site.

Belongs to the iron/manganese superoxide dismutase family. Requires Fe cation as cofactor.

It catalyses the reaction 2 superoxide + 2 H(+) = H2O2 + O2. Destroys superoxide anion radicals which are normally produced within the cells and which are toxic to biological systems. The sequence is that of Probable superoxide dismutase [Fe] (sodF) from Bacillus subtilis (strain 168).